The primary structure comprises 35 residues: Photosystem II reaction center protein T (35 aa).

Residues 3–23 form a helical membrane-spanning segment; it reads ALVYTFLLVSTLGIIFFAIFF.

It belongs to the PsbT family. In terms of assembly, PSII is composed of 1 copy each of membrane proteins PsbA, PsbB, PsbC, PsbD, PsbE, PsbF, PsbH, PsbI, PsbJ, PsbK, PsbL, PsbM, PsbT, PsbY, PsbZ, Psb30/Ycf12, at least 3 peripheral proteins of the oxygen-evolving complex and a large number of cofactors. It forms dimeric complexes.

Its subcellular location is the plastid. It localises to the chloroplast thylakoid membrane. Its function is as follows. Found at the monomer-monomer interface of the photosystem II (PS II) dimer, plays a role in assembly and dimerization of PSII. PSII is a light-driven water plastoquinone oxidoreductase, using light energy to abstract electrons from H(2)O, generating a proton gradient subsequently used for ATP formation. This chain is Photosystem II reaction center protein T, found in Ginkgo biloba (Ginkgo).